Consider the following 453-residue polypeptide: UDP-N-acetylmuramate--L-alanine ligase (453 aa).

ATP is bound at residue 112–118 (GTHGKTT).

Belongs to the MurCDEF family.

The protein localises to the cytoplasm. It carries out the reaction UDP-N-acetyl-alpha-D-muramate + L-alanine + ATP = UDP-N-acetyl-alpha-D-muramoyl-L-alanine + ADP + phosphate + H(+). Its pathway is cell wall biogenesis; peptidoglycan biosynthesis. Its function is as follows. Cell wall formation. The sequence is that of UDP-N-acetylmuramate--L-alanine ligase from Lawsonia intracellularis (strain PHE/MN1-00).